Reading from the N-terminus, the 444-residue chain is Tol-Pal system protein TolB (444 aa).

The signal sequence occupies residues methionine 1–alanine 19.

Belongs to the TolB family. In terms of assembly, the Tol-Pal system is composed of five core proteins: the inner membrane proteins TolA, TolQ and TolR, the periplasmic protein TolB and the outer membrane protein Pal. They form a network linking the inner and outer membranes and the peptidoglycan layer.

The protein resides in the periplasm. Functionally, part of the Tol-Pal system, which plays a role in outer membrane invagination during cell division and is important for maintaining outer membrane integrity. This Rickettsia africae (strain ESF-5) protein is Tol-Pal system protein TolB.